A 114-amino-acid polypeptide reads, in one-letter code: UPF0145 protein TTHA1944 (114 aa).

The protein belongs to the UPF0145 family.

The protein is UPF0145 protein TTHA1944 of Thermus thermophilus (strain ATCC 27634 / DSM 579 / HB8).